The chain runs to 441 residues: MRPRRFTANGPLKGRIGVPGDKSISHRSIMLGALAVGETRVTGLLEGEDVLSTAAAMRAMGATIERDADGMWHVHGVGVGGLLQPQQALDMGNSGTSTRLLMGLVATHPITATFVGDASLSKRPMGRVIDPLSTMGAEFTASPGGRLPLTLRGISPAVPIEYRLPVASAQVKSAVLLAGLNTPGVTTVIEPIPTRDHSERMLRGFGAELTVDVAADGARVIRVRGEAELKPQDIAVPGDPSSAAFFVVAALLVEGSDLVVENVGLNPTRAALFDVLRLMGGSIEELNRREVGGEPVADLRVRHSLLTGIDVDPAVVPSMVDEFPVLFVAAALAKGRTVTTGLEELRVKESDRISAMRAALELAGATVTETEDGLIIDGTGGDPLPGTAEGASVVTHLDHRIAMSMAIAGIASRNGVEVDDTRPIATSFPVFESLLESATRP.

3-phosphoshikimate-binding residues include lysine 22, serine 23, and arginine 27. Residue lysine 22 coordinates phosphoenolpyruvate. Phosphoenolpyruvate contacts are provided by glycine 95 and arginine 123. Residues serine 168, glutamine 170, aspartate 321, and lysine 348 each coordinate 3-phosphoshikimate. Phosphoenolpyruvate is bound at residue glutamine 170. Aspartate 321 serves as the catalytic Proton acceptor. Positions 352 and 400 each coordinate phosphoenolpyruvate.

Belongs to the EPSP synthase family. In terms of assembly, monomer.

It is found in the cytoplasm. It catalyses the reaction 3-phosphoshikimate + phosphoenolpyruvate = 5-O-(1-carboxyvinyl)-3-phosphoshikimate + phosphate. It participates in metabolic intermediate biosynthesis; chorismate biosynthesis; chorismate from D-erythrose 4-phosphate and phosphoenolpyruvate: step 6/7. Functionally, catalyzes the transfer of the enolpyruvyl moiety of phosphoenolpyruvate (PEP) to the 5-hydroxyl of shikimate-3-phosphate (S3P) to produce enolpyruvyl shikimate-3-phosphate and inorganic phosphate. In Novosphingobium aromaticivorans (strain ATCC 700278 / DSM 12444 / CCUG 56034 / CIP 105152 / NBRC 16084 / F199), this protein is 3-phosphoshikimate 1-carboxyvinyltransferase.